Here is a 131-residue protein sequence, read N- to C-terminus: Encapsulated ferritin-like protein (131 aa).

3 residues coordinate Fe cation: Glu30, Glu60, and His63. The tract at residues 96 to 131 (EEEDTGSSSSVAASPTSAPSHGSLGIGSLRQEGKED) is disordered. Residues 98–131 (EDTGSSSSVAASPTSAPSHGSLGIGSLRQEGKED) form a targeting peptide region. The span at 102 to 115 (SSSSVAASPTSAPS) shows a compositional bias: low complexity.

It belongs to the ferritin-like superfamily. EncFtn family. Forms dimers at all pH tested; under acidic conditions formes decamers. The N-terminal domain (residues 1-97) crystallizes as a decameric ring. Four decamers are loaded in the encapsulin nanocompartment in a tetrahedral arrangement. A 3 nm gap is consistently seen between the shell and the cargo. The target peptide extends away from the decameric ring, to allow binding to the interior of the encapsulin nanocompartment shell.

It localises to the encapsulin nanocompartment. The catalysed reaction is 4 Fe(2+) + O2 + 4 H(+) = 4 Fe(3+) + 2 H2O. Its activity is regulated as follows. The ferroxidase activity is inhibited by zinc. Functionally, cargo protein of a type 1 encapsulin nanocompartment. A ferritin-like ferroxidase that converts Fe(2+) to Fe(3+) iron inside the encapsulin nanocompartment. Mineralized Fe(3+) is released to the exterior of the decameric complex for deposition in the encapsulin nanocompartment. In solution the decamer binds 10-15 iron cations; in the encapsulin nanocompartment the decamer can bind up to 48 ions, perhaps via its internal channel, and on its exterior. The cargo-loaded nanocompartment maximally sequesters up to 4150 Fe ions. The sequence is that of Encapsulated ferritin-like protein from Haliangium ochraceum (strain DSM 14365 / JCM 11303 / SMP-2).